Consider the following 605-residue polypeptide: Elongation factor 4 (605 aa).

Positions 9-192 (SRTRNFCIIA…AIIARIPSPK (184 aa)) constitute a tr-type G domain. Residues 21-26 (DHGKST) and 139-142 (NKID) contribute to the GTP site.

The protein belongs to the TRAFAC class translation factor GTPase superfamily. Classic translation factor GTPase family. LepA subfamily.

The protein localises to the cell inner membrane. It carries out the reaction GTP + H2O = GDP + phosphate + H(+). In terms of biological role, required for accurate and efficient protein synthesis under certain stress conditions. May act as a fidelity factor of the translation reaction, by catalyzing a one-codon backward translocation of tRNAs on improperly translocated ribosomes. Back-translocation proceeds from a post-translocation (POST) complex to a pre-translocation (PRE) complex, thus giving elongation factor G a second chance to translocate the tRNAs correctly. Binds to ribosomes in a GTP-dependent manner. This chain is Elongation factor 4, found in Chlorobium limicola (strain DSM 245 / NBRC 103803 / 6330).